A 448-amino-acid polypeptide reads, in one-letter code: Methylenetetrahydrofolate--tRNA-(uracil-5-)-methyltransferase TrmFO (448 aa).

13 to 18 contributes to the FAD binding site; that stretch reads GAGLAG.

This sequence belongs to the MnmG family. TrmFO subfamily. It depends on FAD as a cofactor.

It is found in the cytoplasm. The catalysed reaction is uridine(54) in tRNA + (6R)-5,10-methylene-5,6,7,8-tetrahydrofolate + NADH + H(+) = 5-methyluridine(54) in tRNA + (6S)-5,6,7,8-tetrahydrofolate + NAD(+). It carries out the reaction uridine(54) in tRNA + (6R)-5,10-methylene-5,6,7,8-tetrahydrofolate + NADPH + H(+) = 5-methyluridine(54) in tRNA + (6S)-5,6,7,8-tetrahydrofolate + NADP(+). Catalyzes the folate-dependent formation of 5-methyl-uridine at position 54 (M-5-U54) in all tRNAs. The chain is Methylenetetrahydrofolate--tRNA-(uracil-5-)-methyltransferase TrmFO from Streptococcus pyogenes serotype M18 (strain MGAS8232).